The primary structure comprises 449 residues: GTPase Der (449 aa).

EngA-type G domains follow at residues phenylalanine 2 to proline 169 and valine 180 to threonine 355. GTP is bound by residues glycine 8–serine 15, aspartate 55–leucine 59, asparagine 118–glutamate 121, glycine 186–serine 193, aspartate 233–isoleucine 237, and asparagine 298–aspartate 301. A KH-like domain is found at lysine 356–asparagine 440.

The protein belongs to the TRAFAC class TrmE-Era-EngA-EngB-Septin-like GTPase superfamily. EngA (Der) GTPase family. In terms of assembly, associates with the 50S ribosomal subunit.

Functionally, GTPase that plays an essential role in the late steps of ribosome biogenesis. The sequence is that of GTPase Der from Mycoplasma pneumoniae (strain ATCC 29342 / M129 / Subtype 1) (Mycoplasmoides pneumoniae).